The chain runs to 360 residues: MIDIPKRDTQADKDFSKLTFKLSKHKLKKTKKFDETSKFSTLHEAVNGNIQLFQEKKMKLENGVNTKKTEEKIKQIEEDEINYLLDTIPFIKEYDVKETVSDVTEQNSVFQVKSKNTHTNTFRKYLFHVEKVSNPTTLDAVTDRETVDQIYTCTCGGQMELWVNSTQSDLVCNECGATQPYIETYSGKESNEGMAYKRINHLAECLNALQGKEGTNVPQEVINAVKAEFKKNRISTTSEIKPSKVKQFLKKLGYSMYYENIYTIANMISGIPTLKLSRELEKRLKDMFFEIQEPFFRHKPPKRKNFLSYNYVLYKFSELLGEDDLLQYFPLLKCPKNLHNQDVIWKKICNDLQWEFIATV.

A zinc finger spans residues Cys-153–Cys-175.

Belongs to the nucleo-cytoplasmic large DNA viruses (NCLDVs) VLTF-3 family.

Its function is as follows. Putative transcription factor. The polypeptide is Putative transcription factor A494R (Paramecium bursaria Chlorella virus 1 (PBCV-1)).